The chain runs to 303 residues: Glycine--tRNA ligase alpha subunit (303 aa).

The protein belongs to the class-II aminoacyl-tRNA synthetase family. As to quaternary structure, tetramer of two alpha and two beta subunits.

It is found in the cytoplasm. The catalysed reaction is tRNA(Gly) + glycine + ATP = glycyl-tRNA(Gly) + AMP + diphosphate. This is Glycine--tRNA ligase alpha subunit from Escherichia fergusonii (strain ATCC 35469 / DSM 13698 / CCUG 18766 / IAM 14443 / JCM 21226 / LMG 7866 / NBRC 102419 / NCTC 12128 / CDC 0568-73).